A 545-amino-acid polypeptide reads, in one-letter code: MPNKKILVTCALPYANGPLHIGHMLEHIQADIWVRYQRMKNNEVYFICADDAHGTAIMLKSKQLNINPEIMIAKIQQEHYQDCCDFNISYNNYHSTHSEENYELLNSIYTKLKKSGFIKSRFISQLYDAQNNIFLPDRFIIGTCPKCRAHNQNGDNCDQCGAIYTPLDLINPKSAISGKSPIIKKSKHLFFDLPQFTKSLYTWIHSGVLQEETLHKVKEWFKLGLKEWDISRNEPYFGFKIPNTSSKYFYVWMDAPIGYMGTFKNLCKKNKNILFEDFWSINSKVELYHFIGKDITYFHSLFWPAILESCQYRKPTGIFVHGHVTLNGSKISKSKNNFINVRTYLSHLNSDYLRYYYATKLSSKINDIDLNFNDFMLKVNADIINKILNLASRNSNFITQYNYGYLSNSLENSNLYDFFIDAQYLIGKLFQQREFSEAMRKIMQLADKANQYIDKQAPWHIVKQHGIHNKNIALCIFSMGIQLFRVLVIYLKPVLPILSQYSEKFLNTRLSWNNINIPLTNHKINKFDIIFHRINTNQISSIINK.

The 'HIGH' region signature appears at 13 to 23 (PYANGPLHIGH). Zn(2+) is bound by residues C144, C147, C157, and C160. A 'KMSKS' region motif is present at residues 330-334 (KISKS). ATP is bound at residue K333.

It belongs to the class-I aminoacyl-tRNA synthetase family. MetG type 1 subfamily. As to quaternary structure, monomer. Zn(2+) is required as a cofactor.

It localises to the cytoplasm. It catalyses the reaction tRNA(Met) + L-methionine + ATP = L-methionyl-tRNA(Met) + AMP + diphosphate. Is required not only for elongation of protein synthesis but also for the initiation of all mRNA translation through initiator tRNA(fMet) aminoacylation. In Blochmanniella floridana, this protein is Methionine--tRNA ligase.